The chain runs to 481 residues: UDP-glycosyltransferase 85A2 (481 aa).

UDP-alpha-D-glucose contacts are provided by residues Ser-303, 360-362, 377-385, and 399-402; these read CPQ, HCGWNSTLE, and FAEQ.

It belongs to the UDP-glycosyltransferase family. Expressed in roots, shoots, leaves and flowers.

This is UDP-glycosyltransferase 85A2 (UGT85A2) from Arabidopsis thaliana (Mouse-ear cress).